Consider the following 680-residue polypeptide: Dihydroxyacetone phosphate acyltransferase (680 aa).

Phosphoserine is present on residues S12 and S17. Positions 162 to 167 (HRSYID) match the HXXXXD motif motif. K643 is subject to N6-acetyllysine. The Microbody targeting signal motif lies at 678 to 680 (AKL).

Belongs to the GPAT/DAPAT family. In terms of assembly, part of a heterotrimeric complex composed of GNPAT, AGPS and a modified form of GNPAT.

The protein resides in the peroxisome membrane. The enzyme catalyses dihydroxyacetone phosphate + an acyl-CoA = a 1-acylglycerone 3-phosphate + CoA. The catalysed reaction is dihydroxyacetone phosphate + hexadecanoyl-CoA = 1-hexadecanoylglycerone 3-phosphate + CoA. It participates in membrane lipid metabolism; glycerophospholipid metabolism. Dihydroxyacetonephosphate acyltransferase catalyzing the first step in the biosynthesis of plasmalogens, a subset of phospholipids that differ from other glycerolipids by having an alkyl chain attached through a vinyl ether linkage at the sn-1 position of the glycerol backbone, and which unique physical properties have an impact on various aspects of cell signaling and membrane biology. The chain is Dihydroxyacetone phosphate acyltransferase from Bos taurus (Bovine).